The primary structure comprises 850 residues: MWSNCIFLTLFTFYLFLGQSCCQTDTLLQGQYLKDGQELVSAFNIFKLKFFNFENSSNWYLGIWYNNFYLSGAVWIANRNNPVLGRSGSLTVDSLGRLRILRGASSLLELSSTETTGNTTLKLLDSGNLQLQEMDSDGSMKRTLWQSFDYPTDTLLPGMKLGFNVKTGKRWELTSWLGDTLPASGSFVFGMDDNITNRLTILWLGNVYWASGLWFKGGFSLEKLNTNGFIFSFVSTESEHYFMYSGDENYGGPLFPRIRIDQQGSLQKINLDGVKKHVHCSPSVFGEELEYGCYQQNFRNCVPARYKEVTGSWDCSPFGFGYTYTRKTYDLSYCSRFGYTFRETVSPSAENGFVFNEIGRRLSSYDCYVKCLQNCSCVAYASTNGDGTGCEIWNTDPTNENSASHHPRTIYIRIKGSKLAATWLVVVASLFLIIPVTWLIIYLVLRKFKIKGTNFVSESLKMISSQSCSLTNKRLSTLRVGSTIDQEMLLLELGIERRRRGKRSARNNNNELQIFSFESVAFATDYFSDANKLGEGGFGPVYKGRLIDGEEVAIKRLSLASGQGLVEFKNEAMLIAKLQHTNLVKLLGCCVEKDEKMLIYEYMPNKSLDYFLFDPLRKIVLDWKLRFRIMEGIIQGLLYLHKYSRLKVIHRDIKAGNILLDEDMNPKISDFGMARIFGAQESKANTKRVAGTFGYMSPEYFREGLFSAKSDVFSFGVLMLEIICGRKNNSFHHDSEGPLNLIVHVWNLFKENRVREVIDPSLGDSAVENPQVLRCVQVALLCVQQNADDRPSMLDVVSMIYGDGNNALSLPKEPAFYDGPPRSSPEMEVEPPEMENVSANRVTITVMEAR.

The N-terminal stretch at 1–22 (MWSNCIFLTLFTFYLFLGQSCC) is a signal peptide. The Extracellular portion of the chain corresponds to 23-423 (QTDTLLQGQY…IKGSKLAATW (401 aa)). The region spanning 24–144 (TDTLLQGQYL…DSDGSMKRTL (121 aa)) is the Bulb-type lectin domain. N-linked (GlcNAc...) asparagine glycosylation is found at asparagine 55, asparagine 118, asparagine 194, and asparagine 374. One can recognise a PAN domain in the interval 334 to 416 (CSRFGYTFRE…PRTIYIRIKG (83 aa)). 2 disulfides stabilise this stretch: cysteine 367-cysteine 390 and cysteine 371-cysteine 377. Residues 424-444 (LVVVASLFLIIPVTWLIIYLV) form a helical membrane-spanning segment. Topologically, residues 445-850 (LRKFKIKGTN…RVTITVMEAR (406 aa)) are cytoplasmic. The Protein kinase domain occupies 527–816 (FSDANKLGEG…ALSLPKEPAF (290 aa)). ATP contacts are provided by residues 533-541 (LGEGGFGPV) and lysine 555. Phosphoserine is present on serine 561. The interval 616-633 (LRKIVLDWKLRFRIMEGI) is caM-binding. The active-site Proton acceptor is the aspartate 652. Phosphoserine is present on serine 669. Position 686 is a phosphothreonine (threonine 686). A phosphoserine mark is found at serine 730 and serine 838. Position 845 is a phosphothreonine (threonine 845).

It belongs to the protein kinase superfamily. Ser/Thr protein kinase family. In terms of tissue distribution, mostly expressed in leaves, and, to a lower extent, in roots and flowers.

The protein localises to the cell membrane. It catalyses the reaction L-seryl-[protein] + ATP = O-phospho-L-seryl-[protein] + ADP + H(+). It carries out the reaction L-threonyl-[protein] + ATP = O-phospho-L-threonyl-[protein] + ADP + H(+). Promotes the expression of genes involved in photosynthesis at least in dedifferentiated calli. The chain is G-type lectin S-receptor-like serine/threonine-protein kinase CES101 (CES101) from Arabidopsis thaliana (Mouse-ear cress).